Reading from the N-terminus, the 364-residue chain is MLWPALRSVLFQLDPERVHHLAHWALHRVPLAVARARRPASIPALAVRCMGLDFDGPVGLAAGFDKGDVALPGLFGLGFSHVEIGTITPRPQPGNDRPRLFRLPEHRALLNRMGFNNEGMEACARRLAALPPAARLGPVGINVGKNKVTPNEDAAADYLACIERLHPYADYLVVNISSPNTPGLRQLQERDALDRLLRACVRHLAERAPGKPLLVKLAPDLSPEALDEAVDVAIAAGAAGIVATNTTLSRAGVERHPRAAEAGGLSGAPLERLATDVVRRCYARAAGRVPIVGVGGVMDAEGAYAKIRAGATLVQAYTGLIYGGPAFVGRVNAGLARLLERDGFSTLSDAVGADHRQGGGKAAG.

FMN contacts are provided by residues 62 to 66 (AGFDK) and Thr-86. Lys-66 provides a ligand contact to substrate. Residue 111–115 (NRMGF) participates in substrate binding. FMN is bound by residues Asn-142 and Asn-175. A substrate-binding site is contributed by Asn-175. Ser-178 acts as the Nucleophile in catalysis. Substrate is bound at residue Asn-180. 2 residues coordinate FMN: Lys-216 and Thr-244. Position 245-246 (245-246 (NT)) interacts with substrate. Residues Gly-267, Gly-296, and 317–318 (YT) contribute to the FMN site.

This sequence belongs to the dihydroorotate dehydrogenase family. Type 2 subfamily. As to quaternary structure, monomer. It depends on FMN as a cofactor.

Its subcellular location is the cell membrane. The enzyme catalyses (S)-dihydroorotate + a quinone = orotate + a quinol. It functions in the pathway pyrimidine metabolism; UMP biosynthesis via de novo pathway; orotate from (S)-dihydroorotate (quinone route): step 1/1. Functionally, catalyzes the conversion of dihydroorotate to orotate with quinone as electron acceptor. The protein is Dihydroorotate dehydrogenase (quinone) of Anaeromyxobacter dehalogenans (strain 2CP-1 / ATCC BAA-258).